The primary structure comprises 93 residues: Pyrimidine/purine nucleoside phosphorylase (93 aa).

The protein belongs to the nucleoside phosphorylase PpnP family.

It carries out the reaction a purine D-ribonucleoside + phosphate = a purine nucleobase + alpha-D-ribose 1-phosphate. It catalyses the reaction adenosine + phosphate = alpha-D-ribose 1-phosphate + adenine. The enzyme catalyses cytidine + phosphate = cytosine + alpha-D-ribose 1-phosphate. The catalysed reaction is guanosine + phosphate = alpha-D-ribose 1-phosphate + guanine. It carries out the reaction inosine + phosphate = alpha-D-ribose 1-phosphate + hypoxanthine. It catalyses the reaction thymidine + phosphate = 2-deoxy-alpha-D-ribose 1-phosphate + thymine. The enzyme catalyses uridine + phosphate = alpha-D-ribose 1-phosphate + uracil. The catalysed reaction is xanthosine + phosphate = alpha-D-ribose 1-phosphate + xanthine. Functionally, catalyzes the phosphorolysis of diverse nucleosides, yielding D-ribose 1-phosphate and the respective free bases. Can use uridine, adenosine, guanosine, cytidine, thymidine, inosine and xanthosine as substrates. Also catalyzes the reverse reactions. The chain is Pyrimidine/purine nucleoside phosphorylase from Shewanella halifaxensis (strain HAW-EB4).